A 258-amino-acid polypeptide reads, in one-letter code: Snake venom serine protease BPA (258 aa).

Positions 1-18 (MVLIRVIANLLILQLSNA) are cleaved as a signal peptide. Positions 19-24 (QKSSEL) are excised as a propeptide. The 225-residue stretch at 25-249 (VIGGDECNIT…YLPWIQSIIA (225 aa)) folds into the Peptidase S1 domain. 6 cysteine pairs are disulfide-bonded: C31–C163, C50–C66, C98–C256, C142–C210, C174–C189, and C200–C225. N-linked (GlcNAc...) asparagine glycosylation is found at N32 and N44. The active-site Charge relay system is H65. An N-linked (GlcNAc...) asparagine glycan is attached at N103. D110 (charge relay system) is an active-site residue. A glycan (N-linked (GlcNAc...) asparagine) is linked at N121. An O-linked (GalNAc...) serine glycan is attached at S133. N-linked (GlcNAc...) asparagine glycans are attached at residues N154 and N170. S204 serves as the catalytic Charge relay system. N-linked (GlcNAc...) asparagine glycosylation is found at N211 and N251. T255 carries an O-linked (GalNAc...) threonine glycan.

The protein belongs to the peptidase S1 family. Snake venom subfamily. In terms of assembly, monomer. In terms of processing, N- and O-glycosylated. The glycosylation has a stabilizing effect on the protein. However, the removal of part of the carbohydrates enhances the proteolytic activity of the SVSP towards human and rat fibrinogen. As to expression, expressed by the venom gland.

Its subcellular location is the secreted. With respect to regulation, inhibited by diisopropylfluorophosphate (DFP), but not by SBTI, Antithrombin III/heparin and BPTI, probably due to steric hindrance caused by its huge carbohydrate moietie. Functionally, snake venom serine protease that has a potent and selective fibrinogenolytic activity. Preferentially cleaves the alpha-chain (FGA) of human and rat fibrinogen at Arg-|-Gly bonds, and slowly digests the beta-chain (FGB). In vivo, completely avoids thrombus formation induced in rat, decreases the fibrinogen plasma level and prolonges the recalcification time. Possesses esterolytic and amidolytic activities. In Bothrops jararaca (Jararaca), this protein is Snake venom serine protease BPA.